Reading from the N-terminus, the 315-residue chain is MSSRDKPKTFAEVREEICKRREEMISRDNQKKTKTVAQVREEKGKRREEMISRYNQKKAKTVAQVKEGKGKRREEMISRDNRTKPKTVAQVRDAKRKRTFDHVPRGTREPHAYLRNDPAPQVASVPKSVPEEKDVILDRILSNVPRRKKTTSYEFVPPKHPQEPQWLLQVMSRMNGAGDPKLIIEKNLDSNDVDPRQNRLSIPINTVIQNDFLTLDESRLIDEDEITNEGNMGVAAFLVDQRTKKWNMGFKQWFMTTDSGSSYWSFVLRGEWSNVVETNGLKEGDKISLWSFRSNDILCFALVPPTSSVVESLDK.

The segment at 24–129 (MISRDNQKKT…PQVASVPKSV (106 aa)) is disordered. 3 stretches are compositionally biased toward basic and acidic residues: residues 39-51 (VREE…EEMI), 66-83 (KEGK…DNRT), and 100-114 (FDHV…HAYL). Residues 204–306 (INTVIQNDFL…ILCFALVPPT (103 aa)) constitute a DNA-binding region (TF-B3).

It is found in the nucleus. The sequence is that of B3 domain-containing protein At1g05920 from Arabidopsis thaliana (Mouse-ear cress).